The following is a 789-amino-acid chain: Phenylalanine--tRNA ligase beta subunit (789 aa).

The tRNA-binding domain occupies 38 to 151; that stretch reads KKHLQSFVVV…NTYNVGESFF (114 aa). The region spanning 398-474 is the B5 domain; that stretch reads HNDILLNFSP…RLYGYDKILE (77 aa). Mg(2+) contacts are provided by aspartate 452, aspartate 458, glutamate 461, and glutamate 462. An FDX-ACB domain is found at 694 to 787; it reads LRYQSVKRDF…ISKGFNGILR (94 aa).

Belongs to the phenylalanyl-tRNA synthetase beta subunit family. Type 1 subfamily. Tetramer of two alpha and two beta subunits. Requires Mg(2+) as cofactor.

Its subcellular location is the cytoplasm. It carries out the reaction tRNA(Phe) + L-phenylalanine + ATP = L-phenylalanyl-tRNA(Phe) + AMP + diphosphate + H(+). This chain is Phenylalanine--tRNA ligase beta subunit, found in Ehrlichia ruminantium (strain Gardel).